Reading from the N-terminus, the 307-residue chain is Aspartate carbamoyltransferase catalytic subunit (307 aa).

2 residues coordinate carbamoyl phosphate: Arg56 and Thr57. Lys84 contributes to the L-aspartate binding site. Carbamoyl phosphate is bound by residues Arg106, His136, and Gln139. L-aspartate is bound by residues Arg169 and Arg221. Ala262 and Pro263 together coordinate carbamoyl phosphate.

It belongs to the aspartate/ornithine carbamoyltransferase superfamily. ATCase family. In terms of assembly, heterododecamer (2C3:3R2) of six catalytic PyrB chains organized as two trimers (C3), and six regulatory PyrI chains organized as three dimers (R2).

It carries out the reaction carbamoyl phosphate + L-aspartate = N-carbamoyl-L-aspartate + phosphate + H(+). Its pathway is pyrimidine metabolism; UMP biosynthesis via de novo pathway; (S)-dihydroorotate from bicarbonate: step 2/3. Catalyzes the condensation of carbamoyl phosphate and aspartate to form carbamoyl aspartate and inorganic phosphate, the committed step in the de novo pyrimidine nucleotide biosynthesis pathway. This is Aspartate carbamoyltransferase catalytic subunit from Streptococcus pneumoniae (strain 70585).